Reading from the N-terminus, the 256-residue chain is tRNA pseudouridine synthase A 1 (256 aa).

Residue D53 is the Nucleophile of the active site. Y111 is a substrate binding site.

It belongs to the tRNA pseudouridine synthase TruA family. As to quaternary structure, homodimer.

The catalysed reaction is uridine(38/39/40) in tRNA = pseudouridine(38/39/40) in tRNA. Functionally, formation of pseudouridine at positions 38, 39 and 40 in the anticodon stem and loop of transfer RNAs. This is tRNA pseudouridine synthase A 1 from Protochlamydia amoebophila (strain UWE25).